The chain runs to 468 residues: Glucose transport protein (468 aa).

Residues Met1–Val17 lie on the Cytoplasmic side of the membrane. The helical transmembrane segment at Leu18–Ile38 threads the bilayer. Residues Asn39 to Leu58 are Extracellular-facing. A helical membrane pass occupies residues Ser59–Ala78. Over Asp79 to Ile84 the chain is Cytoplasmic. The chain crosses the membrane as a helical span at residues Lys85–Phe105. At Thr106–Arg114 the chain is on the extracellular side. Residues Val115–Val135 form a helical membrane-spanning segment. Topologically, residues Ser136 to Gln149 are cytoplasmic. The helical transmembrane segment at Leu150 to Ala170 threads the bilayer. The Extracellular segment spans residues Gly171–Arg186. A helical membrane pass occupies residues Trp187 to Pro207. Over Glu208 to Pro265 the chain is Cytoplasmic. The chain crosses the membrane as a helical span at residues Ile266–Phe286. The Extracellular portion of the chain corresponds to Tyr287–Thr307. A helical transmembrane segment spans residues Val308 to Phe328. Residues Gly329–Lys331 lie on the Cytoplasmic side of the membrane. The helical transmembrane segment at Pro332–Phe352 threads the bilayer. The Extracellular segment spans residues Gly353–Gly366. The chain crosses the membrane as a helical span at residues Ala367–Trp387. Residues Gly388 to Ala412 are Cytoplasmic-facing. Residues Gly413–Val433 form a helical membrane-spanning segment. Over Gly434–Gly436 the chain is Extracellular. A helical membrane pass occupies residues Pro437–Val457. The Cytoplasmic segment spans residues Lys458–Met468.

It belongs to the major facilitator superfamily. Sugar transporter (TC 2.A.1.1) family.

Its subcellular location is the cell membrane. The polypeptide is Glucose transport protein (gtr) (Synechocystis sp. (strain ATCC 27184 / PCC 6803 / Kazusa)).